Reading from the N-terminus, the 507-residue chain is Cytochrome P450 monooxygenase helB2 (507 aa).

Residues Met-1–Ala-22 form the signal peptide. Cys-436 provides a ligand contact to heme.

Belongs to the cytochrome P450 family. Requires heme as cofactor.

It functions in the pathway mycotoxin biosynthesis. Its function is as follows. Cytochrome P450 monooxygenase; part of the gene cluster that mediates the biosynthesis of helvolic acid, an antibacterial nortriterpenoid. Protostadienol synthase helA cyclizes (3S)-oxidosqualene to (17Z)-protosta-17(20),24-dien-3-beta-ol (protostadienol). The synthesis of protostadienol is followed by several steps of monooxygenation, dehydrogenation, and acyl transfer to yield the final helvolic acid. Following the cyclization to the tetracyclic protostadienol by helA, cytochrome P450 monooxygenases helB1-mediated and helB2-mediated oxidation at C-4 and C-16, acyltransferase helD2-dependent acetylation of 16-OH, oxidation of C-21 by cytochrome P450 monooxygenase helB4, and short chain dehydrogenase helC-dependent oxidative decarboxylation yield the fusidane skeleton. This intermediate is further modified in three additional steps mediated by the cytochrome P450 monooxygenase helB3, the acyltransferase helD1, and the 3-ketosteroid 1-dehydrogenase helE to give helvolic acid. Compared with the late stages in the biosynthesis of helvolic acid, enzymes involved in the early stage modifications act in a relatively strict order. The hydroxylation of C-16 by helB1 and subsequent acetylation by helD2 should occur before the helB3-mediated oxidation of C-21. C-4 demethylation in fusidane-type antibiotics proceeds in an unusual manner though it is also achieved by oxidative decarboxylation. The methyl group at C-4 beta position is oxidized by helB1 and subsequently removed by the short chain dehydrogenase helC. This Aspergillus fumigatus (strain ATCC MYA-4609 / CBS 101355 / FGSC A1100 / Af293) (Neosartorya fumigata) protein is Cytochrome P450 monooxygenase helB2.